Here is a 427-residue protein sequence, read N- to C-terminus: Tol-Pal system protein TolB (427 aa).

A signal peptide spans 1–27 (MPVSLLRALLVFSLLCLGLSATRAAHA).

This sequence belongs to the TolB family. As to quaternary structure, the Tol-Pal system is composed of five core proteins: the inner membrane proteins TolA, TolQ and TolR, the periplasmic protein TolB and the outer membrane protein Pal. They form a network linking the inner and outer membranes and the peptidoglycan layer.

Its subcellular location is the periplasm. In terms of biological role, part of the Tol-Pal system, which plays a role in outer membrane invagination during cell division and is important for maintaining outer membrane integrity. The sequence is that of Tol-Pal system protein TolB from Thiobacillus denitrificans (strain ATCC 25259 / T1).